A 449-amino-acid polypeptide reads, in one-letter code: uncharacterized protein (449 aa).

The next 13 membrane-spanning stretches (helical) occupy residues 1–21, 26–46, 51–71, 97–117, 137–157, 178–198, 223–243, 244–264, 285–305, 310–330, 340–360, 377–397, and 425–445; these read MVANLPALFSLGVFVGVILLI, IHLTIAAFLGALILVFTHVIT, IDYISQSYATLALFFGVMVLV, LLMLGVIAITTPICAVLPNAT, FVPILILMVFVANSAGLLTLV, FKLSFMGVLAIVSIVVITPFL, VLMAGGVIITLVLIFFVIGES, LPVPIPPASVALMGACLALLL, LIFFMSIFVIIGSLEKTGVTA, LLAVVVGQNIAFGAIVLVFTV, IPLVVAMVPLLKQYVVNIGFA, VLPLFYAMMFGATLGGNGTLV, and GLPVMAVQLVVAALFVAWLMF.

The protein belongs to the CitM (TC 2.A.11) transporter family.

Its subcellular location is the cell membrane. This is an uncharacterized protein from Synechocystis sp. (strain ATCC 27184 / PCC 6803 / Kazusa).